The primary structure comprises 153 residues: Transcription antitermination protein NusB (153 aa).

It belongs to the NusB family.

Functionally, involved in transcription antitermination. Required for transcription of ribosomal RNA (rRNA) genes. Binds specifically to the boxA antiterminator sequence of the ribosomal RNA (rrn) operons. The sequence is that of Transcription antitermination protein NusB from Clostridium tetani (strain Massachusetts / E88).